A 1503-amino-acid chain; its full sequence is Protein Skeletor, isoforms D/E (1503 aa).

An N-terminal signal peptide occupies residues M1 to A28. DM13 domains lie at G34 to P143 and P151 to P258. Residues L287 to G419 form the DOMON domain. Disordered regions lie at residues P451 to P491, N830 to I857, I1086 to S1106, and E1426 to A1503. Residues N830 to Q840 show a composition bias toward low complexity. The segment covering S1452–T1491 has biased composition (low complexity).

In terms of assembly, interacts with Chro and Mgtor as part of a macromolecular complex forming the spindle matrix. Chro colocalizes with Skeletor (Skel) on the chromosomes at interphase and on spindle during metaphase.

The protein localises to the cytoplasm. The protein resides in the cytoskeleton. It is found in the spindle. Its subcellular location is the nucleus. It localises to the nucleolus. The protein localises to the chromosome. Provides structural support to stabilize and organize the microtubule spindle during mitosis (within embryonic somatic cells) and meiosis (within spermatocytes). The role in mitosis regulation depends on the Ran pathway. This Drosophila melanogaster (Fruit fly) protein is Protein Skeletor, isoforms D/E.